Reading from the N-terminus, the 500-residue chain is NAD(P)H-quinone oxidoreductase chain 4, chloroplastic (500 aa).

The next 14 membrane-spanning stretches (helical) occupy residues 4–24 (FPWL…IFFL), 37–57 (ISIC…HFQL), 87–107 (LGSI…AWPI), 113–130 (LFYF…GLFS), 134–154 (LLLF…LLSM), 167–187 (FILY…GMGL), 211–231 (ILLY…IPLH), 242–262 (HYST…YGLI), 274–294 (YLFS…AALT), 313–333 (MGFI…GAIL), 334–354 (QILS…TASD), 386–406 (LALP…GLIT), 417–437 (LITF…LSML), and 462–482 (LFIL…PDFV).

Belongs to the complex I subunit 4 family.

It is found in the plastid. The protein resides in the chloroplast thylakoid membrane. The catalysed reaction is a plastoquinone + NADH + (n+1) H(+)(in) = a plastoquinol + NAD(+) + n H(+)(out). The enzyme catalyses a plastoquinone + NADPH + (n+1) H(+)(in) = a plastoquinol + NADP(+) + n H(+)(out). The chain is NAD(P)H-quinone oxidoreductase chain 4, chloroplastic (ndhD) from Hordeum vulgare (Barley).